We begin with the raw amino-acid sequence, 439 residues long: C4-dicarboxylate transport protein (439 aa).

Helical transmembrane passes span 9 to 29 (HLYF…YYLP), 45 to 65 (MIKM…IAGM), 80 to 100 (LYFE…INII), 150 to 170 (GEIL…SAMG), 186 to 206 (AFFG…FGAM), 221 to 241 (LGML…VVLG), 291 to 311 (VVGL…SIYL), 334 to 354 (ILGV…SGFV), and 357 to 377 (AATF…ILGI).

Belongs to the dicarboxylate/amino acid:cation symporter (DAACS) (TC 2.A.23) family.

The protein resides in the cell inner membrane. Responsible for the transport of dicarboxylates such as succinate, fumarate, and malate from the periplasm across the membrane. This chain is C4-dicarboxylate transport protein, found in Geobacter sp. (strain M21).